We begin with the raw amino-acid sequence, 251 residues long: Small ribosomal subunit protein uS2 (251 aa).

This sequence belongs to the universal ribosomal protein uS2 family.

This Synechococcus elongatus (strain ATCC 33912 / PCC 7942 / FACHB-805) (Anacystis nidulans R2) protein is Small ribosomal subunit protein uS2.